Consider the following 620-residue polypeptide: mRNA cap guanine-N(7) methyltransferase (620 aa).

2 disordered regions span residues 1–176 (MLPP…APSS) and 193–304 (AHAN…DDEY). Residues 29 to 44 (RSPSMSLSPRSQNQSL) show a composition bias toward polar residues. Low complexity-rich tracts occupy residues 45 to 60 (PYPSSRPGSAAGSAHP) and 136 to 157 (PQPTTTPSSPSTSQHTPYTPHH). The 276-residue stretch at 345 to 620 (SPIIGLKKFN…LYMGFAFEKM (276 aa)) folds into the mRNA cap 0 methyltransferase domain. Residue 354–355 (NN) coordinates mRNA. The S-adenosyl-L-methionine site is built by Lys358, Gly377, Asp399, Asp428, Gln454, and Tyr459.

Belongs to the class I-like SAM-binding methyltransferase superfamily. mRNA cap 0 methyltransferase family.

The protein resides in the nucleus. It catalyses the reaction a 5'-end (5'-triphosphoguanosine)-ribonucleoside in mRNA + S-adenosyl-L-methionine = a 5'-end (N(7)-methyl 5'-triphosphoguanosine)-ribonucleoside in mRNA + S-adenosyl-L-homocysteine. Responsible for methylating the 5'-cap structure of mRNAs. The sequence is that of mRNA cap guanine-N(7) methyltransferase (ABD1) from Cryptococcus neoformans var. neoformans serotype D (strain JEC21 / ATCC MYA-565) (Filobasidiella neoformans).